The primary structure comprises 235 residues: Ribosomal RNA small subunit methyltransferase G (235 aa).

S-adenosyl-L-methionine-binding positions include Gly98, Met103, 149 to 150 (VE), and Arg164.

This sequence belongs to the methyltransferase superfamily. RNA methyltransferase RsmG family.

The protein localises to the cytoplasm. The enzyme catalyses guanosine(527) in 16S rRNA + S-adenosyl-L-methionine = N(7)-methylguanosine(527) in 16S rRNA + S-adenosyl-L-homocysteine. Specifically methylates the N7 position of guanine in position 527 of 16S rRNA. This Cupriavidus pinatubonensis (strain JMP 134 / LMG 1197) (Cupriavidus necator (strain JMP 134)) protein is Ribosomal RNA small subunit methyltransferase G.